A 234-amino-acid chain; its full sequence is GTP-binding protein ypt4 (234 aa).

Position 16–23 (16–23 (GPSGTGKS)) interacts with GTP. An Effector region motif is present at residues 39 to 47 (SHTVGIDFA). 68-72 (DTAGQ) contacts GTP. S-geranylgeranyl cysteine attachment occurs at residues Cys233 and Cys234.

The protein belongs to the small GTPase superfamily. Rab family.

It localises to the cell membrane. The sequence is that of GTP-binding protein ypt4 (ypt4) from Schizosaccharomyces pombe (strain 972 / ATCC 24843) (Fission yeast).